A 462-amino-acid polypeptide reads, in one-letter code: BPI fold-containing family B member 2 (462 aa).

Residues 1-22 form the signal peptide; the sequence is MARACSLGLLLLLLLLLRTVVT. T55 bears the Phosphothreonine mark. Phosphoserine is present on S63. N99 is a glycosylation site (N-linked (GlcNAc...) asparagine). The cysteines at positions 140 and 177 are disulfide-linked. N297 and N336 each carry an N-linked (GlcNAc...) asparagine glycan.

It belongs to the BPI/LBP/Plunc superfamily. BPI/LBP family.

The protein resides in the secreted. This Mus musculus (Mouse) protein is BPI fold-containing family B member 2 (Bpifb2).